Here is an 848-residue protein sequence, read N- to C-terminus: MNNDSFSSFKFRRPSSKLHKDPPGYGSRALNSQQSTTSLKRHPSAPVYPRSSAAGSREHLRTRSNAYGSSSSSLDQNSAGASPVLGSSDSGHFHSSHSSRSRPPYSGRFSLNDQSSDELIGAPFDSRGMLSALEEHTAEPDNRSYQPPDPAERYTEKPPNFRSQTTPNPRALRQSASFTTLPPRMEAFPNAAGNDRPTNTKRFSDEATPVRPPGPSRSKKSSFSSFVNSMLGSPRGIKISAPENPVHVTHVGYDNQTGQFTGLPKEWQRLLQESGITQKEQEEHPQTMVDIMRFYEKNARGDDEVWHKFDHAYPQQPTAASPISQPAGSTTYGTQRTSPPTSPRFPQNHEGSFENPRAPPPIPRAAPIAAHAMSPPLGGLVPNRAPPKPPTAAANLVPSRPAPQPPTSSPYSNISTRPSPETQSPQFSTPPIPETEPLPSESQRSRSNSRTNGAQGPWPSVSPSHYQQQQEQAMAVAQQALANKQLERSRSQRQQQQSPRPDQMPIAQPALPQHAPSPEDVALTQASQTARAAPAARPRQRPRQSNAMDVRARLVAICTPGDPTKLYYNLNKIGQGASGGVFTAYEQHTNNCVAIKQMNLDLQPKKDLIINEILVMKDSKHKNIVNFLDSYLHGLDLWVVMEYMEGGSLTDVVTFNIMSEPQIAAVCRETLNGLQHLHSKGVIHRDIKSDNILLSLDGNIKLTDFGFCAQINDSQNKRNTMVGTPYWMAPEVVTRKEYGRKVDIWSLGIMAIEMIEGEPPYLTESPLRALYLIATNGTPKIKDEHNLSPVFKDFLHFALRVDPEKRASAHDLLKHPFMNLCAPLNHLSPLVKAARISRAQEKAQKGGV.

Positions 1–227 are disordered; sequence MNNDSFSSFK…SKKSSFSSFV (227 aa). 2 stretches are compositionally biased toward polar residues: residues 29-38 and 63-80; these read ALNSQQSTTS and RSNA…NSAG. Over residues 101–110 the composition is skewed to low complexity; it reads SRPPYSGRFS. A compositionally biased stretch (basic and acidic residues) spans 133 to 142; it reads LEEHTAEPDN. Residues 161–180 show a composition bias toward polar residues; that stretch reads FRSQTTPNPRALRQSASFTT. Residues 239–252 form the CRIB domain; it reads ISAPENPVHVTHVG. Polar residues-rich tracts occupy residues 315–339, 409–427, and 440–454; these read QQPT…RTSP, SPYS…SPQF, and SESQ…TNGA. The tract at residues 315 to 548 is disordered; it reads QQPTAASPIS…RQRPRQSNAM (234 aa). Low complexity-rich tracts occupy residues 467 to 482 and 524 to 537; these read QQQQ…QALA and TQAS…PAAR. A Protein kinase domain is found at 567–818; it reads YYNLNKIGQG…AHDLLKHPFM (252 aa). ATP is bound by residues 573–581 and Lys596; that span reads IGQGASGGV. The Proton acceptor role is filled by Asp686.

Belongs to the protein kinase superfamily. STE Ser/Thr protein kinase family. STE20 subfamily.

The protein resides in the cytoplasm. The protein localises to the nucleus. It catalyses the reaction L-seryl-[protein] + ATP = O-phospho-L-seryl-[protein] + ADP + H(+). The catalysed reaction is L-threonyl-[protein] + ATP = O-phospho-L-threonyl-[protein] + ADP + H(+). Functionally, MAP4K component of the MAPK pathway required for the mating pheromone response and the regulation of cell polarity and cell cycle. In Emericella nidulans (strain FGSC A4 / ATCC 38163 / CBS 112.46 / NRRL 194 / M139) (Aspergillus nidulans), this protein is Serine/threonine-protein kinase ste20 (ste20).